The chain runs to 1187 residues: Myelin transcription factor 1-like protein (1187 aa).

The segment at 1-22 (MDVDSEEKRHRTRSKGVRVPVE) is disordered. The CCHHC-type 1 zinc finger occupies 22 to 65 (EPAIQELFSCPTPGCDGSGHVSGKYARHRSVYGCPLAKKRKTQD). Zn(2+)-binding residues include Cys31, Cys36, His49, and Cys55. Disordered stretches follow at residues 56–178 (PLAK…QMSC) and 221–248 (RTES…GRKS). The segment covering 89–172 (ECYESDGTED…EEEEEEEENE (84 aa)) has biased composition (acidic residues). Phosphoserine is present on Ser251. Disordered stretches follow at residues 343 to 422 (SETN…DRSE) and 450 to 514 (REKM…GCDG). Residues 344–358 (ETNPQDRSQPPNMSV) show a composition bias toward polar residues. 4 stretches are compositionally biased toward basic and acidic residues: residues 362–377 (VRQE…DRSY), 401–412 (AKEDGCHERDDD), 450–488 (REKM…DSHV), and 496–506 (DPSRTEKRESK). 2 consecutive CCHHC-type zinc fingers follow at residues 498-541 (SRTE…PPEI) and 542-585 (LAMH…KLAK). Zn(2+) contacts are provided by Cys507, Cys512, His525, Cys531, Cys551, Cys556, His569, and Cys575. The segment at 686 to 710 (ASPSSSTTSSYAPSSSSNLSCGGGS) is disordered. 3 CCHHC-type zinc fingers span residues 897-940 (LATS…GIRI), 946-989 (DKED…QKDG), and 999-1042 (KSVK…MKKA). Cys906, Cys911, His924, Cys930, Cys955, Cys960, His973, Cys979, Cys1008, Cys1013, His1026, and Cys1032 together coordinate Zn(2+). A coiled-coil region spans residues 1058–1132 (NGIENDEEIK…ANLSQSLIHS (75 aa)).

Belongs to the MYT1 family. Interacts with SIN3B. As to expression, brain.

The protein localises to the nucleus. Its subcellular location is the chromosome. Transcription factor that plays a key role in neuronal differentiation by specifically repressing expression of non-neuronal genes during neuron differentiation. In contrast to other transcription repressors that inhibit specific lineages, mediates repression of multiple differentiation programs. Also represses expression of negative regulators of neurogenesis, such as members of the Notch signaling pathway, including HES1. The combination of three transcription factors, ASCL1, POU3F2/BRN2 and MYT1L, is sufficient to reprogram fibroblasts and other somatic cells into induced neuronal (iN) cells in vitro. Directly binds the 5'-AAGTT-3' core motif present on the promoter of target genes and represses transcription by recruiting a multiprotein complex containing SIN3B. The 5'-AAGTT-3' core motif is absent from the promoter of neural genes. This chain is Myelin transcription factor 1-like protein, found in Mus musculus (Mouse).